The chain runs to 391 residues: Heme A synthase (391 aa).

A run of 8 helical transmembrane segments spans residues 37 to 57 (IRLW…VGGL), 121 to 141 (RQLG…FLAA), 152 to 172 (LLAL…MVAS), 186 to 206 (LATH…QALL), 229 to 249 (TTVL…VAGI), 298 to 318 (FLHR…WIFG), 332 to 352 (LLAM…LSAA), and 354 to 374 (WQVA…ILHA). H300 provides a ligand contact to heme. H360 contributes to the heme binding site.

It belongs to the COX15/CtaA family. Type 2 subfamily. As to quaternary structure, interacts with CtaB. Requires heme b as cofactor.

The protein localises to the cell membrane. The enzyme catalyses Fe(II)-heme o + 2 A + H2O = Fe(II)-heme a + 2 AH2. It functions in the pathway porphyrin-containing compound metabolism; heme A biosynthesis; heme A from heme O: step 1/1. Its function is as follows. Catalyzes the conversion of heme O to heme A by two successive hydroxylations of the methyl group at C8. The first hydroxylation forms heme I, the second hydroxylation results in an unstable dihydroxymethyl group, which spontaneously dehydrates, resulting in the formyl group of heme A. The sequence is that of Heme A synthase from Cereibacter sphaeroides (strain ATCC 17023 / DSM 158 / JCM 6121 / CCUG 31486 / LMG 2827 / NBRC 12203 / NCIMB 8253 / ATH 2.4.1.) (Rhodobacter sphaeroides).